A 268-amino-acid chain; its full sequence is MVFFNLLEAAFLGLIEGLTEFIPVSSTGHLLLIGHFLGFESTGKTFEVLIQLGAILAILSVYSAKLARIATDFPRDARTRRFVLGVLVAFLPAAVIGALAHGFIKGVLFETPMLVCIMLIVGGFILLWVDQLNLRPRYHNVMDYPLPICLAIGFIQCLAMIPGVSRSGSTIVGSLLLGADKRSAAEFSFFLAMPTMAGAFAYDLFKSRNILSFNDGALIVVGFIMAFISGVFVVRHLLDYVSRHGFALFGWWRLIVGSAGMAALIIWG.

8 helical membrane passes run 11–33 (FLGL…LLLI), 46–66 (FEVL…SAKL), 84–104 (LGVL…HGFI), 107–127 (VLFE…FILL), 144–164 (YPLP…IPGV), 185–205 (AEFS…YDLF), 213–233 (FNDG…GVFV), and 246–266 (FALF…ALII).

This sequence belongs to the UppP family.

It localises to the cell inner membrane. The enzyme catalyses di-trans,octa-cis-undecaprenyl diphosphate + H2O = di-trans,octa-cis-undecaprenyl phosphate + phosphate + H(+). Functionally, catalyzes the dephosphorylation of undecaprenyl diphosphate (UPP). Confers resistance to bacitracin. This is Undecaprenyl-diphosphatase from Brucella suis (strain ATCC 23445 / NCTC 10510).